The following is a 686-amino-acid chain: NADH-ubiquinone oxidoreductase chain 5 (686 aa).

17 helical membrane passes run 3–23, 40–60, 101–121, 139–159, 160–180, 198–218, 222–242, 261–281, 293–313, 321–341, 350–370, 382–402, 432–452, 472–492, 526–546, 635–655, and 665–685; these read LIILFLPFVGAFISGFLGRFV, ALLSLYYWLSINELIIGLFSF, ITLPFLFTVLFISFLIHLFSV, LFTFFMAILVTGANYFVLFVG, WEGIGVVSYLLINFWFTRIQA, LSIAYFVMLPAFGSADFSTVF, AYINQTTITIIGFLLLVGAMA, TPVSALIHAATLVTAGSYLLI, VLLVITIIGASTAFFAATCGL, IIAFSTISQLGYMVMAIGLSQ, LFHAYFKALLFLGAGSVIHAF, LINFLPFTYAVMLVGTLSLLA, ILGSVTAGLTAFYSFRLISLV, ITVIIPLAVLAIFSIFFGYVT, LIFKLLPTIFSLAGTLFALYL, ALYITLGLLSLLFIVFAPMLV, and LIILFIFTLIVNSAYLNKKLS.

This sequence belongs to the complex I subunit 5 family.

The protein resides in the mitochondrion inner membrane. The catalysed reaction is a ubiquinone + NADH + 5 H(+)(in) = a ubiquinol + NAD(+) + 4 H(+)(out). In terms of biological role, core subunit of the mitochondrial membrane respiratory chain NADH dehydrogenase (Complex I) that is believed to belong to the minimal assembly required for catalysis. Complex I functions in the transfer of electrons from NADH to the respiratory chain. The immediate electron acceptor for the enzyme is believed to be ubiquinone. The sequence is that of NADH-ubiquinone oxidoreductase chain 5 (ND5) from Schizophyllum commune (Split gill fungus).